We begin with the raw amino-acid sequence, 262 residues long: Encapsulin nanocompartment protein Rv1762c (262 aa).

The protein belongs to the UPF0145 family.

Its subcellular location is the encapsulin nanocompartment. Functionally, cargo protein of a type 1 encapsulin nanocompartment possibly involved in protection against oxidative stress. In Mycobacterium tuberculosis (strain ATCC 25618 / H37Rv), this protein is Encapsulin nanocompartment protein Rv1762c.